The following is an 84-amino-acid chain: Putative antitoxin RelB4 (84 aa).

Its function is as follows. Antitoxin component of a type II toxin-antitoxin (TA) system. Its cognate toxin is RelE4 (Potential). In Methanocaldococcus jannaschii (strain ATCC 43067 / DSM 2661 / JAL-1 / JCM 10045 / NBRC 100440) (Methanococcus jannaschii), this protein is Putative antitoxin RelB4 (relB4).